Here is a 513-residue protein sequence, read N- to C-terminus: ATP synthase subunit alpha (513 aa).

ATP is bound at residue 169-176; sequence GDRQIGKT.

Belongs to the ATPase alpha/beta chains family. As to quaternary structure, F-type ATPases have 2 components, CF(1) - the catalytic core - and CF(0) - the membrane proton channel. CF(1) has five subunits: alpha(3), beta(3), gamma(1), delta(1), epsilon(1). CF(0) has three main subunits: a(1), b(2) and c(9-12). The alpha and beta chains form an alternating ring which encloses part of the gamma chain. CF(1) is attached to CF(0) by a central stalk formed by the gamma and epsilon chains, while a peripheral stalk is formed by the delta and b chains.

It is found in the cell inner membrane. It carries out the reaction ATP + H2O + 4 H(+)(in) = ADP + phosphate + 5 H(+)(out). Its function is as follows. Produces ATP from ADP in the presence of a proton gradient across the membrane. The alpha chain is a regulatory subunit. In Vibrio alginolyticus, this protein is ATP synthase subunit alpha.